The following is a 325-amino-acid chain: DNA repair and recombination protein RadA (325 aa).

Position 107–114 (107–114 (GEFGSGKT)) interacts with ATP.

It belongs to the eukaryotic RecA-like protein family.

In terms of biological role, involved in DNA repair and in homologous recombination. Binds and assemble on single-stranded DNA to form a nucleoprotein filament. Hydrolyzes ATP in a ssDNA-dependent manner and promotes DNA strand exchange between homologous DNA molecules. This chain is DNA repair and recombination protein RadA, found in Methanosarcina barkeri (strain Fusaro / DSM 804).